The following is a 68-amino-acid chain: Large ribosomal subunit protein eL24 (68 aa).

Residues Cys7, Cys10, Cys33, and Cys37 each coordinate Zn(2+). A C4-type zinc finger spans residues 7-37 (CDFCGRIIEPGTGKMFVKNDGTILWFCSSKC).

Belongs to the eukaryotic ribosomal protein eL24 family. As to quaternary structure, part of the 50S ribosomal subunit. Forms a cluster with proteins L3 and L14. Requires Zn(2+) as cofactor.

Functionally, binds to the 23S rRNA. The sequence is that of Large ribosomal subunit protein eL24 from Methanopyrus kandleri (strain AV19 / DSM 6324 / JCM 9639 / NBRC 100938).